Here is a 414-residue protein sequence, read N- to C-terminus: Enolase (414 aa).

Gln-162 provides a ligand contact to (2R)-2-phosphoglycerate. The active-site Proton donor is the Glu-204. Mg(2+) is bound by residues Asp-239, Glu-280, and Asp-307. (2R)-2-phosphoglycerate is bound by residues Lys-332, Arg-361, Ser-362, and Lys-383. Lys-332 functions as the Proton acceptor in the catalytic mechanism.

The protein belongs to the enolase family. The cofactor is Mg(2+).

The protein localises to the cytoplasm. Its subcellular location is the secreted. The protein resides in the cell surface. The enzyme catalyses (2R)-2-phosphoglycerate = phosphoenolpyruvate + H2O. Its pathway is carbohydrate degradation; glycolysis; pyruvate from D-glyceraldehyde 3-phosphate: step 4/5. Functionally, catalyzes the reversible conversion of 2-phosphoglycerate (2-PG) into phosphoenolpyruvate (PEP). It is essential for the degradation of carbohydrates via glycolysis. This chain is Enolase, found in Campylobacter jejuni subsp. jejuni serotype O:2 (strain ATCC 700819 / NCTC 11168).